A 374-amino-acid chain; its full sequence is Protein FAM199X (374 aa).

Residues 238–343 are disordered; it reads YIREHSPRQR…QLKEQRQARK (106 aa). The span at 261–295 shows a compositional bias: low complexity; that stretch reads SNGSTSGVSAHSSSNASMVSSTSSSTASTGSNSST. The segment covering 315–334 has biased composition (basic residues); that stretch reads DSKKRSKQRKMQQKALRKRQ. Residues 317 to 346 adopt a coiled-coil conformation; sequence KKRSKQRKMQQKALRKRQLKEQRQARKERL.

The protein belongs to the FAM199 family.

This chain is Protein FAM199X (fam199x), found in Danio rerio (Zebrafish).